Consider the following 458-residue polypeptide: Flavonol 3-O-glucosyltransferase F3GT2 (458 aa).

The active-site Proton acceptor is the H20. Residue H20 participates in an anthocyanidin binding. D119 acts as the Charge relay in catalysis. T141 provides a ligand contact to UDP-alpha-D-glucose. H150 contacts an anthocyanidin. The UDP-alpha-D-glucose site is built by A333, Q335, H350, W353, N354, S355, and E358. G373 is a binding site for an anthocyanidin. Residues D374 and Q375 each contribute to the UDP-alpha-D-glucose site.

The protein belongs to the UDP-glycosyltransferase family. Expressed in ovaries.

It catalyses the reaction a flavonol + UDP-alpha-D-glucose = a flavonol 3-O-beta-D-glucoside + UDP + H(+). It participates in flavonoid metabolism. Catalyzes the glucosylation of quercetin. Preferentially uses UDP-glucose as sugar donor, but is also able to use UDP-gal and UDP-xyl. Is probably not required for the accumulation of anthocyanin in red-fleshed kiwifruit varieties. The chain is Flavonol 3-O-glucosyltransferase F3GT2 from Actinidia chinensis var. chinensis (Chinese soft-hair kiwi).